The following is a 56-amino-acid chain: UPF0391 membrane protein Jann_3570 (56 aa).

Transmembrane regions (helical) follow at residues Trp4–Ala24 and Gly29–Ala48.

It belongs to the UPF0391 family.

The protein resides in the cell membrane. In Jannaschia sp. (strain CCS1), this protein is UPF0391 membrane protein Jann_3570.